A 246-amino-acid polypeptide reads, in one-letter code: Probable transcriptional regulatory protein Dole_0371 (246 aa).

Belongs to the TACO1 family.

It localises to the cytoplasm. The chain is Probable transcriptional regulatory protein Dole_0371 from Desulfosudis oleivorans (strain DSM 6200 / JCM 39069 / Hxd3) (Desulfococcus oleovorans).